The following is a 281-amino-acid chain: Transcription factor LBX1 (281 aa).

Basic and acidic residues predominate over residues methionine 1 to leucine 20. Residues methionine 1 to proline 35 are disordered. The segment at residues arginine 125–leucine 184 is a DNA-binding region (homeobox). Residues asparagine 214 to aspartate 281 are disordered. Positions serine 253–aspartate 267 are enriched in polar residues. Residues cysteine 268–aspartate 281 are compositionally biased toward acidic residues.

In terms of assembly, interacts with SKOR1 which acts as a transcriptional corepressor.

Its subcellular location is the nucleus. Transcription factor required for the development of GABAergic interneurons in the dorsal horn of the spinal cord and migration and further development of hypaxial muscle precursor cells for limb muscles, diaphragm and hypoglossal cord. The protein is Transcription factor LBX1 (LBX1) of Homo sapiens (Human).